The sequence spans 238 residues: Neuromodulin (238 aa).

A disordered region spans residues 1–238 (MLCCMRRTKQ…EEPEADQEHA (238 aa)). S-palmitoyl cysteine attachment occurs at residues Cys-3 and Cys-4. The span at 9–32 (KQVEKNDDDQKIEQDGIKPEDKAH) shows a compositional bias: basic and acidic residues. The region spanning 31-60 (AHKAATKIQASFRGHITRKKLKGEKKDDVQ) is the IQ domain. A Phosphoserine; by PHK and PKC modification is found at Ser-41. Residues 54 to 83 (EKKDDVQAAEAEANKKDEAPVADGVEKKGE) are compositionally biased toward basic and acidic residues. Residues 84–95 (GTTTAEAAPATG) are compositionally biased toward low complexity. The segment covering 97 to 116 (KPDEPGKAGETPSEEKKGEG) has biased composition (basic and acidic residues). Over residues 119-130 (ATEQAAPQAPAS) the composition is skewed to low complexity. The span at 139–154 (ETESATKASTDNSPSS) shows a compositional bias: polar residues. 3 positions are modified to phosphoserine: Ser-151, Ser-153, and Ser-154. Basic and acidic residues predominate over residues 155–167 (KAEDAPAKEEPKQ). The span at 168–199 (ADVPAAVTAAAATTPAAEDAAAKATAQPPTET) shows a compositional bias: low complexity. Phosphothreonine is present on Thr-181. A phosphoserine; by CK2 mark is found at Ser-202 and Ser-203. Residues 213–225 (DETKPKESARQDE) show a composition bias toward basic and acidic residues. Residues 226–238 (GKEEEPEADQEHA) are compositionally biased toward acidic residues.

The protein belongs to the neuromodulin family. As to quaternary structure, identified in a complex containing FGFR4, NCAM1, CDH2, PLCG1, FRS2, SRC, SHC1, GAP43 and CTTN. Interacts (via IQ domain) with calmodulin. Binds calmodulin with a greater affinity in the absence of Ca(2+) than in its presence. In terms of processing, phosphorylated. Phosphorylation of this protein by a protein kinase C is specifically correlated with certain forms of synaptic plasticity. Post-translationally, palmitoylated by ZDHHC3. Palmitoylation is regulated by ARF6 and is essential for plasma membrane association and axonal and dendritic filopodia induction. Deacylated by LYPLA2.

Its subcellular location is the cell membrane. It is found in the cell projection. The protein localises to the growth cone membrane. It localises to the synapse. The protein resides in the filopodium membrane. Its subcellular location is the perikaryon. It is found in the dendrite. The protein localises to the axon. It localises to the cytoplasm. This protein is associated with nerve growth. It is a major component of the motile 'growth cones' that form the tips of elongating axons. Plays a role in axonal and dendritic filopodia induction. This chain is Neuromodulin (GAP43), found in Homo sapiens (Human).